We begin with the raw amino-acid sequence, 336 residues long: MSELVLITGITGFVASHSAEALLSQGYRVRGTYRFQEKLDGLLKNRPEWEKKVEFVQVPDCRAPNAYVEAAKGVDYVIHAATEVHSNLEPPRKDPHELLHIAIQGCENALIAAAQEPKVKRFVYISSEAALKGPVNYFGDGHVFTEKDWNPKTLREAEESDDELLNYTVCKKLGERAMHAFVARNTPRFQAIALNPPLILGPVFHLQSVDNLNFSTWFFWQLIKGRYEVAPESKFFNYVDVRDLAEAQVKALTAKTDKDRFVISGGAFKNDDIVNVALKYFPQFKDKIAKPNGETSPCNYEVDASLSIKELGLTYRPAEETFKDATESLYKLAGLL.

An N-terminal signal peptide occupies residues 1–21; it reads MSELVLITGITGFVASHSAEA. Residue Lys-38 coordinates NADP(+). Thr-153 is modified (phosphothreonine). An NADP(+)-binding site is contributed by Tyr-167.

Belongs to the NAD(P)-dependent epimerase/dehydratase family. Dihydroflavonol-4-reductase subfamily.

This is an uncharacterized protein from Schizosaccharomyces pombe (strain 972 / ATCC 24843) (Fission yeast).